The primary structure comprises 403 residues: Phosphoglycerate kinase (403 aa).

Substrate-binding positions include 21–23 (DFN), arginine 36, 59–62 (HLGR), arginine 119, and arginine 154. ATP is bound by residues lysine 207, glycine 299, glutamate 330, and 357-360 (GGDA).

The protein belongs to the phosphoglycerate kinase family. In terms of assembly, monomer.

It localises to the cytoplasm. It carries out the reaction (2R)-3-phosphoglycerate + ATP = (2R)-3-phospho-glyceroyl phosphate + ADP. Its pathway is carbohydrate degradation; glycolysis; pyruvate from D-glyceraldehyde 3-phosphate: step 2/5. The polypeptide is Phosphoglycerate kinase (Chlamydia trachomatis serovar L2 (strain ATCC VR-902B / DSM 19102 / 434/Bu)).